Reading from the N-terminus, the 383-residue chain is Histidine decarboxylase (383 aa).

A substrate-binding site is contributed by His-120. Lys-233 is modified (N6-(pyridoxal phosphate)lysine).

It belongs to the group II decarboxylase family. Homotetramer. The cofactor is pyridoxal 5'-phosphate.

It carries out the reaction L-histidine + H(+) = histamine + CO2. This chain is Histidine decarboxylase, found in Acinetobacter baumannii (strain ATCC 17978 / DSM 105126 / CIP 53.77 / LMG 1025 / NCDC KC755 / 5377).